We begin with the raw amino-acid sequence, 593 residues long: Probable metalloprotease ARX1 (593 aa).

This sequence belongs to the peptidase M24 family. Component of the nucleoplasmic and cytoplasmic pre-60S ribosomal particles. Interacts directly with REI1.

Its subcellular location is the cytoplasm. The protein resides in the nucleus. Functionally, probable metalloprotease involved in proper assembly of pre-ribosomal particles during the biogenesis of the 60S ribosomal subunit. Accompanies the pre-60S particles to the cytoplasm. In Saccharomyces cerevisiae (strain ATCC 204508 / S288c) (Baker's yeast), this protein is Probable metalloprotease ARX1 (ARX1).